Consider the following 322-residue polypeptide: tRNA U34 carboxymethyltransferase (322 aa).

Carboxy-S-adenosyl-L-methionine-binding positions include Lys-92, Trp-106, Lys-111, Gly-131, Asp-153–Ser-155, Val-181–Glu-182, Met-196, Tyr-200, and Arg-315.

The protein belongs to the class I-like SAM-binding methyltransferase superfamily. CmoB family. In terms of assembly, homotetramer.

The catalysed reaction is carboxy-S-adenosyl-L-methionine + 5-hydroxyuridine(34) in tRNA = 5-carboxymethoxyuridine(34) in tRNA + S-adenosyl-L-homocysteine + H(+). Its function is as follows. Catalyzes carboxymethyl transfer from carboxy-S-adenosyl-L-methionine (Cx-SAM) to 5-hydroxyuridine (ho5U) to form 5-carboxymethoxyuridine (cmo5U) at position 34 in tRNAs. The protein is tRNA U34 carboxymethyltransferase of Pseudoalteromonas translucida (strain TAC 125).